The primary structure comprises 252 residues: uncharacterized protein (252 aa).

A helical transmembrane segment spans residues L80–A100.

Its subcellular location is the host membrane. The protein localises to the virion. This is an uncharacterized protein from Acanthamoeba polyphaga mimivirus (APMV).